The following is a 69-amino-acid chain: Small ribosomal subunit protein uS7 (69 aa).

It belongs to the universal ribosomal protein uS7 family. As to quaternary structure, part of the 30S ribosomal subunit.

One of the primary rRNA binding proteins, it binds directly to 16S rRNA where it nucleates assembly of the head domain of the 30S subunit. Is located at the subunit interface close to the decoding center. The sequence is that of Small ribosomal subunit protein uS7 (rps7) from Methanococcoides methylutens.